The primary structure comprises 292 residues: Bifunctional protein FolD (292 aa).

Residues 165–167 (GRS), S190, and T231 each bind NADP(+).

This sequence belongs to the tetrahydrofolate dehydrogenase/cyclohydrolase family. Homodimer.

The catalysed reaction is (6R)-5,10-methylene-5,6,7,8-tetrahydrofolate + NADP(+) = (6R)-5,10-methenyltetrahydrofolate + NADPH. The enzyme catalyses (6R)-5,10-methenyltetrahydrofolate + H2O = (6R)-10-formyltetrahydrofolate + H(+). It functions in the pathway one-carbon metabolism; tetrahydrofolate interconversion. In terms of biological role, catalyzes the oxidation of 5,10-methylenetetrahydrofolate to 5,10-methenyltetrahydrofolate and then the hydrolysis of 5,10-methenyltetrahydrofolate to 10-formyltetrahydrofolate. The sequence is that of Bifunctional protein FolD from Arthrobacter globiformis.